The sequence spans 631 residues: 30-kDa cleavage and polyadenylation specificity factor 30 (631 aa).

The segment at 12–38 is disordered; the sequence is EGGLDSGPVQNTASVPVAPPENSSSAA. C3H1-type zinc fingers lie at residues 60–87, 88–112, and 114–141; these read SFRQ…HQFD, KARM…VYKH, and NEDI…HAKL. The tract at residues 179 to 234 is disordered; sequence QDRPQGQVPMQGQPQESGNLQQQQQQQPQQSQHQVSQTLIPNPADQTNRTSHPLPQ. The segment covering 182–215 has biased composition (low complexity); that stretch reads PQGQVPMQGQPQESGNLQQQQQQQPQQSQHQVSQ. Residues 216–231 are compositionally biased toward polar residues; sequence TLIPNPADQTNRTSHP. Residues 237-372 enclose the YTH domain; the sequence is NRYFVVKSNN…SVGEQLASLL (136 aa). Positions 392-407 are enriched in basic and acidic residues; that stretch reads EEEKAKGVNPESRAEN. Disordered regions lie at residues 392–447 and 541–631; these read EEEK…RGIM and PHMG…KKRR. The span at 412-432 shows a compositional bias: acidic residues; that stretch reads PFEDNEEEEEEEDESEEEEES. Basic and acidic residues predominate over residues 573–583; the sequence is KTPERSDERGV. Phosphoserine is present on residues S610 and S612. Basic residues predominate over residues 621–631; it reads RSRHGEGKKRR.

This sequence belongs to the CPSF4/YTH1 family. In terms of assembly, component of the cleavage and polyadenylation specificity factor (CPSF) complex. Can form homodimers. Binds to calmodulin. Forms a complex with cleavage and polyadenylation specificity factor (CPSF) subunits CPSF73-I, CPSF73-II, CPSF100, CPSF160, CFIS2, FIPS3, FIPS5, PAPS2, PAPS3, CLPS3, PCFS1, PCFS4, CSTF50 and CSTF77. In terms of tissue distribution, expressed in seedlings, roots, leaves, siliques, stems and flowers.

The protein resides in the nucleus. It localises to the cytoplasm. Endonuclease activity is repressed by the N-terminal domain of FIPS5. Nuclease activity is inhibited by zinc (&gt;100 uM), cadmium in a progressive manner (50 percent activity at 1 mM Cd(2+)), and high salt levels (e.g. KCl or NaCl &gt;600 mM). Stimulated by ATP in the presence of Zn(2+), even at inhibitory zinc concentrations. Elevated temperatures prevent RNA-binding at 55 degrees Celsius, but endonuclease activity at 70 degrees Celsius. The sulfhydryl reagent dithiothreitol (DTT) inhibits both RNA-binding and nuclease activities. Component of the cleavage and polyadenylation specificity factor (CPSF) complex that play a key role in pre-mRNA 3'-end formation. May interact with poly(A) polymerase and other factors to bring about cleavage and poly(A) addition. Mediates poly(A) site selection. Binds RNA in a calcium-dependent manner. Exhibits endonuclease activity with an ability to nick and degrade linear as well as circular single-stranded RNA that leaves RNA 3' ends with hydroxyl groups, thus mediating processing of the pre-mRNA as a prelude to the polyadenylation. Involved in the post-transcriptional control, probably via poly(A) addition, of the responses of plants to stress, especially genes mediating tolerance to oxidative stress. Plays a role in the regulation of salicylic acid (SA) production via the control of messenger RNA 3' end processing, thus being a key component of programmed cell death and plant immune responses required for resistance to virulent Pseudomonas syringae pv tomato DC3000 (Pst). The sequence is that of 30-kDa cleavage and polyadenylation specificity factor 30 from Arabidopsis thaliana (Mouse-ear cress).